The chain runs to 254 residues: 3-deoxy-manno-octulosonate cytidylyltransferase (254 aa).

Belongs to the KdsB family.

It localises to the cytoplasm. It carries out the reaction 3-deoxy-alpha-D-manno-oct-2-ulosonate + CTP = CMP-3-deoxy-beta-D-manno-octulosonate + diphosphate. It participates in nucleotide-sugar biosynthesis; CMP-3-deoxy-D-manno-octulosonate biosynthesis; CMP-3-deoxy-D-manno-octulosonate from 3-deoxy-D-manno-octulosonate and CTP: step 1/1. It functions in the pathway bacterial outer membrane biogenesis; lipopolysaccharide biosynthesis. In terms of biological role, activates KDO (a required 8-carbon sugar) for incorporation into bacterial lipopolysaccharide in Gram-negative bacteria. The polypeptide is 3-deoxy-manno-octulosonate cytidylyltransferase (Haemophilus influenzae (strain PittEE)).